The primary structure comprises 20 residues: Protein YfiS (20 aa).

The sequence is that of Protein YfiS from Escherichia coli (strain K12).